The sequence spans 130 residues: Small ribosomal subunit protein uS11 (130 aa).

A disordered region spans residues 109-130 (EDITPIPHDGTGRPGGKRGRRV).

The protein belongs to the universal ribosomal protein uS11 family. As to quaternary structure, part of the 30S ribosomal subunit.

Its function is as follows. Located on the platform of the 30S subunit. The chain is Small ribosomal subunit protein uS11 from Methanobrevibacter smithii (strain ATCC 35061 / DSM 861 / OCM 144 / PS).